Reading from the N-terminus, the 578-residue chain is PTS system fructose-specific EIIB'BC component (578 aa).

PTS EIIB type-2 domains are found at residues 1 to 99 (MSKI…EALA) and 119 to 214 (VVAI…AALA). Residue Cys125 is the Phosphocysteine intermediate; for EIIB activity of the active site. Position 125 is a phosphocysteine; by EIIA (Cys125). The PTS EIIC type-2 domain maps to 241–576 (PYMHLLTGVS…KKPIPAEERA (336 aa)). A run of 9 helical transmembrane segments spans residues 251 to 271 (YMLP…VFGI), 284 to 304 (LMAI…AGFI), 319 to 339 (IGGM…VAGF), 364 to 384 (VLIL…YVVG), 405 to 425 (NAVV…GGPI), 428 to 450 (AAYT…AVMA), 477 to 497 (AGGA…IPFA), 518 to 538 (LSMA…VLAI), and 545 to 565 (LGLY…LLIA).

Its subcellular location is the cell inner membrane. The catalysed reaction is D-fructose(out) + N(pros)-phospho-L-histidyl-[protein] = D-fructose 1-phosphate(in) + L-histidyl-[protein]. The phosphoenolpyruvate-dependent sugar phosphotransferase system (sugar PTS), a major carbohydrate active transport system, catalyzes the phosphorylation of incoming sugar substrates concomitantly with their translocation across the cell membrane. The enzyme II FruAB PTS system is involved in fructose transport. The polypeptide is PTS system fructose-specific EIIB'BC component (Rhodobacter capsulatus (Rhodopseudomonas capsulata)).